The chain runs to 407 residues: Na(+)-translocating NADH-quinone reductase subunit F (407 aa).

A helical membrane pass occupies residues 3–23 (IILGVVMFTLIVLALVLVILF). The region spanning 32–126 (GDITISINGD…DMDIELPEEI (95 aa)) is the 2Fe-2S ferredoxin-type domain. Cysteine 69, cysteine 75, cysteine 78, and cysteine 110 together coordinate [2Fe-2S] cluster. The FAD-binding FR-type domain occupies 129 to 269 (VKKWECTVIS…SGPFGEFFAK (141 aa)). The catalytic stretch occupies residues 272-389 (DAEMVFIGGG…PMMNAAVIGM (118 aa)).

It belongs to the NqrF family. In terms of assembly, composed of six subunits; NqrA, NqrB, NqrC, NqrD, NqrE and NqrF. It depends on [2Fe-2S] cluster as a cofactor. Requires FAD as cofactor.

Its subcellular location is the cell inner membrane. It carries out the reaction a ubiquinone + n Na(+)(in) + NADH + H(+) = a ubiquinol + n Na(+)(out) + NAD(+). In terms of biological role, NQR complex catalyzes the reduction of ubiquinone-1 to ubiquinol by two successive reactions, coupled with the transport of Na(+) ions from the cytoplasm to the periplasm. The first step is catalyzed by NqrF, which accepts electrons from NADH and reduces ubiquinone-1 to ubisemiquinone by a one-electron transfer pathway. The sequence is that of Na(+)-translocating NADH-quinone reductase subunit F from Vibrio vulnificus (strain CMCP6).